A 374-amino-acid chain; its full sequence is 3-dehydroquinate synthase (374 aa).

The protein belongs to the archaeal-type DHQ synthase family.

The catalysed reaction is 2-amino-2,3,7-trideoxy-D-lyxo-hept-6-ulosonate + NAD(+) + H2O = 3-dehydroquinate + NH4(+) + NADH + H(+). Catalyzes the oxidative deamination and cyclization of 2-amino-3,7-dideoxy-D-threo-hept-6-ulosonic acid (ADH) to yield 3-dehydroquinate (DHQ), which is fed into the canonical shikimic pathway of aromatic amino acid biosynthesis. In Methanocella arvoryzae (strain DSM 22066 / NBRC 105507 / MRE50), this protein is 3-dehydroquinate synthase.